We begin with the raw amino-acid sequence, 233 residues long: Small ribosomal subunit protein uS2 (233 aa).

The protein belongs to the universal ribosomal protein uS2 family.

The polypeptide is Small ribosomal subunit protein uS2 (Bacillus anthracis).